The following is a 373-amino-acid chain: UDP-3-O-acylglucosamine N-acyltransferase 2 (373 aa).

Catalysis depends on H257, which acts as the Proton acceptor. The disordered stretch occupies residues 346–373; that stretch reads DGRTAASAEAAAPSSDATGVDQPDQAAS. A compositionally biased stretch (low complexity) spans 350–362; the sequence is AASAEAAAPSSDA.

The protein belongs to the transferase hexapeptide repeat family. LpxD subfamily. As to quaternary structure, homotrimer.

It carries out the reaction a UDP-3-O-[(3R)-3-hydroxyacyl]-alpha-D-glucosamine + a (3R)-hydroxyacyl-[ACP] = a UDP-2-N,3-O-bis[(3R)-3-hydroxyacyl]-alpha-D-glucosamine + holo-[ACP] + H(+). It participates in bacterial outer membrane biogenesis; LPS lipid A biosynthesis. Functionally, catalyzes the N-acylation of UDP-3-O-acylglucosamine using 3-hydroxyacyl-ACP as the acyl donor. Is involved in the biosynthesis of lipid A, a phosphorylated glycolipid that anchors the lipopolysaccharide to the outer membrane of the cell. The protein is UDP-3-O-acylglucosamine N-acyltransferase 2 of Rhodopseudomonas palustris (strain BisB18).